Here is a 186-residue protein sequence, read N- to C-terminus: Adenylate kinase (186 aa).

11 to 16 (GAGKGT) lines the ATP pocket. The interval 31 to 60 (STGDILRAAVKNGTAMGIEAKKYMDAGDLV) is NMP. AMP is bound by residues threonine 32, arginine 37, 58-60 (DLV), 86-89 (GFPR), and glutamine 93. An LID region spans residues 127 to 137 (GRAIKEGRSDD). Arginine 128 contributes to the ATP binding site. AMP contacts are provided by arginine 134 and arginine 145. Glycine 173 provides a ligand contact to ATP.

The protein belongs to the adenylate kinase family. Monomer.

It is found in the cytoplasm. The enzyme catalyses AMP + ATP = 2 ADP. Its pathway is purine metabolism; AMP biosynthesis via salvage pathway; AMP from ADP: step 1/1. Its function is as follows. Catalyzes the reversible transfer of the terminal phosphate group between ATP and AMP. Plays an important role in cellular energy homeostasis and in adenine nucleotide metabolism. This Leptospira biflexa serovar Patoc (strain Patoc 1 / Ames) protein is Adenylate kinase.